A 522-amino-acid chain; its full sequence is Amphoterin-induced protein 2 (522 aa).

The N-terminal stretch at 1 to 39 (MSLRVHTLPTLLGAVVRPGCRELLCLLMITVAVGPGASG) is a signal peptide. One can recognise an LRRNT domain in the interval 40-68 (VCPTACICATDIVSCTNKHLSKVPGNLFR). Residues 40–398 (VCPTACICAT…RSHAHEAFNT (359 aa)) are Extracellular-facing. 2 disulfides stabilise this stretch: Cys-41-Cys-47 and Cys-45-Cys-54. LRR repeat units lie at residues 69–90 (LMKRLDLSYNRIGLLDSEWIPV), 94–115 (KLNTLILRHNNITSISTGSFST), 118–139 (NLKCLDLSSNKLKTVKNAVFQE), 142–163 (VLEVLLLYNNHISYLDPSAFGG), 166–187 (QLQKLYLSGNFLTQFPMDLYVG), and 193–214 (ELMFLDVSYNRIPSMPMHHINL). A glycan (N-linked (GlcNAc...) asparagine) is linked at Asn-104. One can recognise an LRRCT domain in the interval 228-284 (NPFVCDCSLYSLLVFWYRRHFSSVMDFKNDYTCRLWSDSRHSRQVLLLQDSFMNCSD). Intrachain disulfides connect Cys-232-Cys-260 and Cys-234-Cys-282. N-linked (GlcNAc...) asparagine glycosylation is found at Asn-281, Asn-288, Asn-345, Asn-373, Asn-381, and Asn-384. The region spanning 289 to 379 (GSFRALGFIH…RLLNETVDVT (91 aa)) is the Ig-like C2-type domain. Cys-310 and Cys-363 are oxidised to a cystine. The helical transmembrane segment at 399–419 (AFTTLAACVASIVLVLLYLYL) threads the bilayer. Topologically, residues 420–522 (TPCPCKCKTK…FSDTPFVAST (103 aa)) are cytoplasmic. Residues 501-522 (RGKSDSDSVNSVFSDTPFVAST) are disordered.

It belongs to the immunoglobulin superfamily. AMIGO family. Binds itself as well as AMIGO1 and AMIGO3.

It is found in the cell membrane. The protein resides in the nucleus. In terms of biological role, required for depolarization-dependent survival of cultured cerebellar granule neurons. May mediate homophilic as well as heterophilic cell-cell interaction with AMIGO1 or AMIGO3. May contribute to signal transduction through its intracellular domain. The chain is Amphoterin-induced protein 2 from Pongo abelii (Sumatran orangutan).